Reading from the N-terminus, the 372-residue chain is Chaperone protein DnaJ (372 aa).

The region spanning 5-70 is the J domain; the sequence is DFYEVLGVTK…QKRAAYDRYG (66 aa). Residues 129–207 form a CR-type zinc finger; the sequence is GKLASLTLPT…CGGAGRVTRE (79 aa). Positions 142, 145, 159, 162, 181, 184, 195, and 198 each coordinate Zn(2+). CXXCXGXG motif repeat units lie at residues 142 to 149, 159 to 166, 181 to 188, and 195 to 202; these read CEACDGTG, CPTCGGQG, CPQCHGRG, and CQACGGAG.

The protein belongs to the DnaJ family. As to quaternary structure, homodimer. Requires Zn(2+) as cofactor.

Its subcellular location is the cytoplasm. Participates actively in the response to hyperosmotic and heat shock by preventing the aggregation of stress-denatured proteins and by disaggregating proteins, also in an autonomous, DnaK-independent fashion. Unfolded proteins bind initially to DnaJ; upon interaction with the DnaJ-bound protein, DnaK hydrolyzes its bound ATP, resulting in the formation of a stable complex. GrpE releases ADP from DnaK; ATP binding to DnaK triggers the release of the substrate protein, thus completing the reaction cycle. Several rounds of ATP-dependent interactions between DnaJ, DnaK and GrpE are required for fully efficient folding. Also involved, together with DnaK and GrpE, in the DNA replication of plasmids through activation of initiation proteins. The polypeptide is Chaperone protein DnaJ (Beijerinckia indica subsp. indica (strain ATCC 9039 / DSM 1715 / NCIMB 8712)).